We begin with the raw amino-acid sequence, 86 residues long: ATP synthase epsilon chain (86 aa).

The protein belongs to the ATPase epsilon chain family. F-type ATPases have 2 components, CF(1) - the catalytic core - and CF(0) - the membrane proton channel. CF(1) has five subunits: alpha(3), beta(3), gamma(1), delta(1), epsilon(1). CF(0) has three main subunits: a, b and c.

It localises to the cell inner membrane. Functionally, produces ATP from ADP in the presence of a proton gradient across the membrane. This is ATP synthase epsilon chain (atpC) from Caulobacter vibrioides (strain ATCC 19089 / CIP 103742 / CB 15) (Caulobacter crescentus).